We begin with the raw amino-acid sequence, 34 residues long: Photosystem II reaction center protein M (34 aa).

A helical membrane pass occupies residues 5–25 (ILAFIATALFILVPTAFLLII).

The protein belongs to the PsbM family. As to quaternary structure, PSII is composed of 1 copy each of membrane proteins PsbA, PsbB, PsbC, PsbD, PsbE, PsbF, PsbH, PsbI, PsbJ, PsbK, PsbL, PsbM, PsbT, PsbX, PsbY, PsbZ, Psb30/Ycf12, at least 3 peripheral proteins of the oxygen-evolving complex and a large number of cofactors. It forms dimeric complexes.

The protein localises to the plastid. Its subcellular location is the chloroplast thylakoid membrane. In terms of biological role, one of the components of the core complex of photosystem II (PSII). PSII is a light-driven water:plastoquinone oxidoreductase that uses light energy to abstract electrons from H(2)O, generating O(2) and a proton gradient subsequently used for ATP formation. It consists of a core antenna complex that captures photons, and an electron transfer chain that converts photonic excitation into a charge separation. This subunit is found at the monomer-monomer interface. The protein is Photosystem II reaction center protein M of Coffea arabica (Arabian coffee).